Here is an 841-residue protein sequence, read N- to C-terminus: DNA mismatch repair protein MutS (841 aa).

Position 600–607 (600–607 (GPNMAGKS)) interacts with ATP.

It belongs to the DNA mismatch repair MutS family.

Its function is as follows. This protein is involved in the repair of mismatches in DNA. It is possible that it carries out the mismatch recognition step. This protein has a weak ATPase activity. This is DNA mismatch repair protein MutS from Carboxydothermus hydrogenoformans (strain ATCC BAA-161 / DSM 6008 / Z-2901).